The primary structure comprises 185 residues: MAESHGNAHGATAHTEADGGHKAPFPPFQKETFASQLVSLTIAFVALYLISSRLALPRVRQTIDDRENTIKGDLAQAQKLKDDSDAALKAYEAELAAARARAQAIGNETREKLNAAAEAERKALEERLSVKLADAEKTIASTRAAAMSNVRGIASDAATAIVQQLTGATPDSKLVDSAVDASMKG.

Positions 1-25 are disordered; the sequence is MAESHGNAHGATAHTEADGGHKAPF. Residues 34 to 56 traverse the membrane as a helical segment; that stretch reads ASQLVSLTIAFVALYLISSRLAL.

Belongs to the ATPase B chain family. As to quaternary structure, F-type ATPases have 2 components, F(1) - the catalytic core - and F(0) - the membrane proton channel. F(1) has five subunits: alpha(3), beta(3), gamma(1), delta(1), epsilon(1). F(0) has three main subunits: a(1), b(2) and c(10-14). The alpha and beta chains form an alternating ring which encloses part of the gamma chain. F(1) is attached to F(0) by a central stalk formed by the gamma and epsilon chains, while a peripheral stalk is formed by the delta and b chains.

It is found in the cell inner membrane. Functionally, f(1)F(0) ATP synthase produces ATP from ADP in the presence of a proton or sodium gradient. F-type ATPases consist of two structural domains, F(1) containing the extramembraneous catalytic core and F(0) containing the membrane proton channel, linked together by a central stalk and a peripheral stalk. During catalysis, ATP synthesis in the catalytic domain of F(1) is coupled via a rotary mechanism of the central stalk subunits to proton translocation. In terms of biological role, component of the F(0) channel, it forms part of the peripheral stalk, linking F(1) to F(0). The b'-subunit is a diverged and duplicated form of b found in plants and photosynthetic bacteria. The protein is ATP synthase subunit b 2 (atpF2) of Nitrobacter winogradskyi (strain ATCC 25391 / DSM 10237 / CIP 104748 / NCIMB 11846 / Nb-255).